The chain runs to 37 residues: Large ribosomal subunit protein bL36 (37 aa).

This sequence belongs to the bacterial ribosomal protein bL36 family.

The sequence is that of Large ribosomal subunit protein bL36 from Prochlorococcus marinus (strain MIT 9303).